The sequence spans 235 residues: MDMESQKILFALSTPMEIRNECCLPSHSSPKMYLGTCFFDLSSSWGIDDRDDLLRTIHRMIDNGHAARLAGFYHRWFRYSPCEWRDYLAELNEQGQAYAQFVASTAECCGEGGIKAWDYVRMGFLSRMGVLNNWLSEEESLWIQSRIHLRALRYYSNWRQYFAGYTFGRQYWQSPEDDHLPLLREFLARKEYDDSGNDMFYQLFASDDAYYPTLSWQPLAYYSACPETLKDMSDL.

The protein to E.coli YbeU.

This is an uncharacterized protein from Escherichia coli (strain K12).